We begin with the raw amino-acid sequence, 372 residues long: Cyanuric acid amidohydrolase (372 aa).

An RU A region spans residues 1-105; that stretch reads MPTTLRRAHV…IVFEAREVDE (105 aa). Substrate-binding positions include arginine 56 and 84 to 85; that span reads SG. The interval 115 to 252 is RU B; the sequence is SLALGRARTP…HEIMVAGMSR (138 aa). The active site involves lysine 165. Substrate contacts are provided by residues arginine 197 and 235–236; that span reads SG. Residue serine 235 is the Nucleophile of the active site. The interval 258–372 is RU C; that stretch reads LAIDHGVMRD…GPVAIIVERT (115 aa). Mg(2+) is bound at residue glutamate 305. Residues arginine 332 and 351–352 contribute to the substrate site; that span reads SG. Mg(2+) is bound by residues alanine 354, glutamine 357, glycine 358, proline 359, and glycine 362.

Belongs to the cyclic amide hydrolase (CyAH) family. As to quaternary structure, homotetramer.

It catalyses the reaction cyanurate + H2O = 1-carboxybiuret + H(+). It functions in the pathway xenobiotic degradation; atrazine degradation; biuret from cyanurate: step 1/1. With respect to regulation, inhibited by barbituric acid. Responsible for the hydrolysis of cyanuric acid, an intermediate formed during catabolism of s-triazine based compounds in herbicides such as atrazine and polymers such as melamine. Catalyzes the hydrolytic opening of the s-triazine ring of cyanuric acid (2,4,6-trihydroxy-s-triazine) to yield carbon dioxide and carboxybiuret, which spontaneously decarboxylates to biuret. The protein is Cyanuric acid amidohydrolase of Bradyrhizobium sp. (strain ORS 375).